Here is a 388-residue protein sequence, read N- to C-terminus: Tryptophan synthase beta chain 1 (388 aa).

Lys-82 carries the N6-(pyridoxal phosphate)lysine modification.

The protein belongs to the TrpB family. Tetramer of two alpha and two beta chains. Pyridoxal 5'-phosphate is required as a cofactor.

It catalyses the reaction (1S,2R)-1-C-(indol-3-yl)glycerol 3-phosphate + L-serine = D-glyceraldehyde 3-phosphate + L-tryptophan + H2O. It participates in amino-acid biosynthesis; L-tryptophan biosynthesis; L-tryptophan from chorismate: step 5/5. Its function is as follows. The beta subunit is responsible for the synthesis of L-tryptophan from indole and L-serine. In Pyrococcus abyssi (strain GE5 / Orsay), this protein is Tryptophan synthase beta chain 1 (trpB1).